Consider the following 348-residue polypeptide: Flap endonuclease 1 (348 aa).

The interval 1-98 (MGLAELRELI…ETLERRRERK (98 aa)) is N-domain. Residues Asp28, Asp80, Glu149, Glu151, Asp170, Asp172, and Asp234 each coordinate Mg(2+). The I-domain stretch occupies residues 113-256 (EREKYARQVA…RALQLIRKYG (144 aa)). Residues 340-348 (RQETLDAFF) are interaction with PCNA.

It belongs to the XPG/RAD2 endonuclease family. FEN1 subfamily. In terms of assembly, interacts with PCNA. PCNA stimulates the nuclease activity without altering cleavage specificity. Mg(2+) serves as cofactor.

Functionally, structure-specific nuclease with 5'-flap endonuclease and 5'-3' exonuclease activities involved in DNA replication and repair. During DNA replication, cleaves the 5'-overhanging flap structure that is generated by displacement synthesis when DNA polymerase encounters the 5'-end of a downstream Okazaki fragment. Binds the unpaired 3'-DNA end and kinks the DNA to facilitate 5' cleavage specificity. Cleaves one nucleotide into the double-stranded DNA from the junction in flap DNA, leaving a nick for ligation. Also involved in the base excision repair (BER) pathway. Acts as a genome stabilization factor that prevents flaps from equilibrating into structures that lead to duplications and deletions. Also possesses 5'-3' exonuclease activity on nicked or gapped double-stranded DNA. This chain is Flap endonuclease 1, found in Methanopyrus kandleri (strain AV19 / DSM 6324 / JCM 9639 / NBRC 100938).